The chain runs to 1498 residues: DNA-directed RNA polymerase subunit beta' (1498 aa).

Residues Cys-67, Cys-69, Cys-82, and Cys-85 each contribute to the Zn(2+) site. Mg(2+) contacts are provided by Asp-499, Asp-501, and Asp-503. Zn(2+) contacts are provided by Cys-867, Cys-943, Cys-950, and Cys-953.

This sequence belongs to the RNA polymerase beta' chain family. The RNAP catalytic core consists of 2 alpha, 1 beta, 1 beta' and 1 omega subunit. When a sigma factor is associated with the core the holoenzyme is formed, which can initiate transcription. It depends on Mg(2+) as a cofactor. Requires Zn(2+) as cofactor.

It catalyses the reaction RNA(n) + a ribonucleoside 5'-triphosphate = RNA(n+1) + diphosphate. DNA-dependent RNA polymerase catalyzes the transcription of DNA into RNA using the four ribonucleoside triphosphates as substrates. The polypeptide is DNA-directed RNA polymerase subunit beta' (Chlorobium luteolum (strain DSM 273 / BCRC 81028 / 2530) (Pelodictyon luteolum)).